The sequence spans 581 residues: NADH-quinone oxidoreductase subunit C/D (581 aa).

The tract at residues 1 to 172 (MSAFELVTEL…PLFNMTASLF (172 aa)) is NADH dehydrogenase I subunit C. The tract at residues 196–581 (ELMILNYGPH…IDYVMSDVDR (386 aa)) is NADH dehydrogenase I subunit D.

It in the N-terminal section; belongs to the complex I 30 kDa subunit family. The protein in the C-terminal section; belongs to the complex I 49 kDa subunit family. As to quaternary structure, NDH-1 is composed of 13 different subunits. Subunits NuoB, CD, E, F, and G constitute the peripheral sector of the complex.

Its subcellular location is the cell inner membrane. The enzyme catalyses a quinone + NADH + 5 H(+)(in) = a quinol + NAD(+) + 4 H(+)(out). Functionally, NDH-1 shuttles electrons from NADH, via FMN and iron-sulfur (Fe-S) centers, to quinones in the respiratory chain. The immediate electron acceptor for the enzyme in this species is believed to be ubiquinone. Couples the redox reaction to proton translocation (for every two electrons transferred, four hydrogen ions are translocated across the cytoplasmic membrane), and thus conserves the redox energy in a proton gradient. The protein is NADH-quinone oxidoreductase subunit C/D of Rhodopseudomonas palustris (strain ATCC BAA-98 / CGA009).